Here is a 422-residue protein sequence, read N- to C-terminus: MIHYLIFPILLIFFQIIKSSGYYVPANGDDWTILKPPSCKNKLPGQYIDSLPFTFGIVVNPYILNEDGDYEKPIVSKIKPSLTTTTFVTSIITTSTATAPGSKPTKTKDIIVQIHDGQVQKMKHKHDYSSGGGDDDDDDEDCFDEKNIDMAAKRDYQDMNTQEQANEDSGQVLAESDSHQQVVDQNQQINEEEEETQEQQMQEENNNTNEIEDNKVQEFETIEEIYDDIDNNESRPNNSKKYHKKRPHNNYENKHGHKDYHEDHHHNHRYKDHENGHEEDDHKWNKPKPMPEQEEQEQEQEQKPKHEKSEGYESEFVSPVYSVACYTNSTLKMTLTDGILRDSDDRIGCIVSGHQFQFDGPTPQHGAIYAAGWSVTKQGQLALGDSTKFYQCASGDFYNLYDEPIAFQCHPVTLDVVELIEC.

The first 21 residues, 1-21, serve as a signal peptide directing secretion; it reads MIHYLIFPILLIFFQIIKSSG. 2 disordered regions span residues 116 to 143 and 155 to 313; these read DGQVQKMKHKHDYSSGGGDDDDDDEDCF and DYQD…EGYE. Acidic residues predominate over residues 133–143; it reads GDDDDDDEDCF. Residues 158–169 show a composition bias toward polar residues; the sequence is DMNTQEQANEDS. A coiled-coil region spans residues 179-214; sequence HQQVVDQNQQINEEEEETQEQQMQEENNNTNEIEDN. Composition is skewed to low complexity over residues 180–189 and 198–209; these read QQVVDQNQQI and EQQMQEENNNTN. A glycan (N-linked (GlcNAc...) asparagine) is linked at N206. Over residues 220–231 the composition is skewed to acidic residues; the sequence is ETIEEIYDDIDN. N-linked (GlcNAc...) asparagine glycosylation is found at N232 and N237. Basic residues predominate over residues 238–248; it reads NSKKYHKKRPH. Basic and acidic residues-rich tracts occupy residues 249–284 and 300–311; these read NNYENKHGHKDYHEDHHHNHRYKDHENGHEEDDHKW and QEQKPKHEKSEG. The N-linked (GlcNAc...) asparagine glycan is linked to N328.

It belongs to the PIR protein family. O-glycosylated. Extensively O-mannosylated.

Its subcellular location is the secreted. It localises to the cell wall. Probable structural component of the cell wall involved in cell wall integrity and virulence. The sequence is that of Probable cell wall mannoprotein PIR32 (PIR32) from Candida albicans (strain SC5314 / ATCC MYA-2876) (Yeast).